Reading from the N-terminus, the 64-residue chain is Large ribosomal subunit protein uL29 (64 aa).

The protein belongs to the universal ribosomal protein uL29 family.

The protein is Large ribosomal subunit protein uL29 (rpl29) of Methanothermobacter thermautotrophicus (strain ATCC 29096 / DSM 1053 / JCM 10044 / NBRC 100330 / Delta H) (Methanobacterium thermoautotrophicum).